Consider the following 109-residue polypeptide: Nucleoid-associated protein Ssed_2851 (109 aa).

This sequence belongs to the YbaB/EbfC family. As to quaternary structure, homodimer.

It localises to the cytoplasm. It is found in the nucleoid. Its function is as follows. Binds to DNA and alters its conformation. May be involved in regulation of gene expression, nucleoid organization and DNA protection. The protein is Nucleoid-associated protein Ssed_2851 of Shewanella sediminis (strain HAW-EB3).